Here is a 183-residue protein sequence, read N- to C-terminus: ATP-dependent protease subunit HslV (183 aa).

The active site involves T13. Na(+) contacts are provided by G168, C171, and T174.

This sequence belongs to the peptidase T1B family. HslV subfamily. A double ring-shaped homohexamer of HslV is capped on each side by a ring-shaped HslU homohexamer. The assembly of the HslU/HslV complex is dependent on binding of ATP.

It is found in the cytoplasm. The catalysed reaction is ATP-dependent cleavage of peptide bonds with broad specificity.. Allosterically activated by HslU binding. Its function is as follows. Protease subunit of a proteasome-like degradation complex believed to be a general protein degrading machinery. The sequence is that of ATP-dependent protease subunit HslV from Xanthomonas campestris pv. campestris (strain ATCC 33913 / DSM 3586 / NCPPB 528 / LMG 568 / P 25).